Consider the following 459-residue polypeptide: Antizyme inhibitor 2 (459 aa).

A necessary for polyamine uptake stimulation region spans residues 117-140; sequence QVAQIKYAAKHGVRLLSFDNEVEL.

Belongs to the Orn/Lys/Arg decarboxylase class-II family. ODC antizyme inhibitor subfamily. As to quaternary structure, monomer. Interacts with OAZ1, OAZ2 and OAZ3; this interaction disrupts the interaction between the antizyme and ODC1. Does not form a heterodimer with ODC1. In terms of processing, ubiquitinated, leading to its proteasomal degradation; a process that is reduced in presence of antizymes. May also be degraded through the lysosomal degradative pathway in a proteasomal-independent manner. In terms of tissue distribution, expressed in the medulla and chromaffin cells of the adrenal gland. Expressed in the Langerhans islets of the pancreas. Expressed in the inner part of the seminiferous tubules and in spermatozoa located in the lumen of the epididymis of the testis. Expressed in the cortex, hippocampus and cerebellum of the brain. Expressed in normal and neoplastic mast cells (MC) (at protein level). Expressed in testis, pancreas and brain. Expressed throughout the differentiation process from spermatids to spermatozoa in the inner part of the seminiferous tubules. Expressed in the kidney: expressed in the superficial (Cs) and the deep layer (Cd) of the cortex region and in the outer stripe (OS), inner stripe (IS) and the inner medulla papilla (IM) of the medulla region.

The protein localises to the nucleus. It is found in the cytoplasm. It localises to the perinuclear region. The protein resides in the membrane. Its subcellular location is the cytoplasmic vesicle. The protein localises to the endoplasmic reticulum-Golgi intermediate compartment. It is found in the golgi apparatus. It localises to the cis-Golgi network. The protein resides in the trans-Golgi network. Its subcellular location is the cytoplasmic granule. The protein localises to the cell projection. It is found in the axon. It localises to the dendrite. The protein resides in the perikaryon. Its function is as follows. Antizyme inhibitor (AZI) protein that positively regulates ornithine decarboxylase (ODC) activity and polyamine uptake. AZI is an enzymatically inactive ODC homolog that counteracts the negative effect of ODC antizymes (AZs) OAZ1, OAZ2 and OAZ3 on ODC activity by competing with ODC for antizyme-binding. Inhibits antizyme-dependent ODC degradation and releases ODC monomers from their inactive complex with antizymes, leading to formation of the catalytically active ODC homodimer and restoring polyamine production. Participates in the morphological integrity of the trans-Golgi network (TGN) and functions as a regulator of intracellular secretory vesicle trafficking. The polypeptide is Antizyme inhibitor 2 (Azin2) (Mus musculus (Mouse)).